The chain runs to 665 residues: Macrolide export ATP-binding/permease protein MacB (665 aa).

The ABC transporter domain maps to 17–255 (MQVKGLIREF…AAQPASIIDK (239 aa)). 53 to 60 (GQSGSGKS) lines the ATP pocket. A run of 4 helical transmembrane segments spans residues 287-307 (LLTM…VGLG), 544-564 (IAII…LVSV), 588-608 (FLIE…GLAF), and 630-650 (SIIA…FLPA).

Belongs to the ABC transporter superfamily. Macrolide exporter (TC 3.A.1.122) family. In terms of assembly, homodimer. Part of the tripartite efflux system MacAB-TolC, which is composed of an inner membrane transporter, MacB, a periplasmic membrane fusion protein, MacA, and an outer membrane component, TolC. The complex forms a large protein conduit and can translocate molecules across both the inner and outer membranes. Interacts with MacA.

Its subcellular location is the cell inner membrane. In terms of biological role, part of the tripartite efflux system MacAB-TolC. MacB is a non-canonical ABC transporter that contains transmembrane domains (TMD), which form a pore in the inner membrane, and an ATP-binding domain (NBD), which is responsible for energy generation. Confers resistance against macrolides. This chain is Macrolide export ATP-binding/permease protein MacB, found in Psychrobacter cryohalolentis (strain ATCC BAA-1226 / DSM 17306 / VKM B-2378 / K5).